Consider the following 152-residue polypeptide: Small ribosomal subunit protein bS16 (152 aa).

Positions 118–130 are enriched in basic and acidic residues; sequence AEKHKAKASEKKA. The segment at 118–152 is disordered; that stretch reads AEKHKAKASEKKAAAAASADEAGSAAADDAEGSES. Over residues 131–144 the composition is skewed to low complexity; sequence AAAASADEAGSAAA.

The protein belongs to the bacterial ribosomal protein bS16 family.

The polypeptide is Small ribosomal subunit protein bS16 (Beutenbergia cavernae (strain ATCC BAA-8 / DSM 12333 / CCUG 43141 / JCM 11478 / NBRC 16432 / NCIMB 13614 / HKI 0122)).